Reading from the N-terminus, the 261-residue chain is Guanine nucleotide exchange factor BopE (261 aa).

This sequence belongs to the GEF (guanine exchange factor) SopE family. Monomer. Interacts with human CDC42.

It is found in the secreted. Its function is as follows. Activator for both CDC42 and RAC1 by directly interacting with these Rho GTPases and acting as a guanine nucleotide exchange factor (GEF). This activation results in actin cytoskeleton rearrangements and stimulates membrane ruffling, thus promoting bacterial entry into non-phagocytic cells. In Burkholderia pseudomallei (strain 1710b), this protein is Guanine nucleotide exchange factor BopE (bopE).